Here is a 134-residue protein sequence, read N- to C-terminus: Translation initiation factor 2 subunit beta (134 aa).

The span at 1–12 shows a compositional bias: basic and acidic residues; that stretch reads MGYEEQLDRALE. Positions 1 to 32 are disordered; sequence MGYEEQLDRALEETPDIEGTAARFSVPDPDVR.

It belongs to the eIF-2-beta/eIF-5 family. In terms of assembly, heterotrimer composed of an alpha, a beta and a gamma chain.

Its function is as follows. eIF-2 functions in the early steps of protein synthesis by forming a ternary complex with GTP and initiator tRNA. The protein is Translation initiation factor 2 subunit beta of Natronomonas pharaonis (strain ATCC 35678 / DSM 2160 / CIP 103997 / JCM 8858 / NBRC 14720 / NCIMB 2260 / Gabara) (Halobacterium pharaonis).